We begin with the raw amino-acid sequence, 296 residues long: tRNA dimethylallyltransferase (296 aa).

ATP is bound at residue 11–18 (GPTAVGKT). Substrate is bound at residue 13–18 (TAVGKT). Residues 36 to 39 (DSQQ) form an interaction with substrate tRNA region.

Belongs to the IPP transferase family. Monomer. Mg(2+) is required as a cofactor.

The catalysed reaction is adenosine(37) in tRNA + dimethylallyl diphosphate = N(6)-dimethylallyladenosine(37) in tRNA + diphosphate. In terms of biological role, catalyzes the transfer of a dimethylallyl group onto the adenine at position 37 in tRNAs that read codons beginning with uridine, leading to the formation of N6-(dimethylallyl)adenosine (i(6)A). In Streptococcus equi subsp. zooepidemicus (strain H70), this protein is tRNA dimethylallyltransferase.